A 231-amino-acid polypeptide reads, in one-letter code: Protoporphyrinogen IX dehydrogenase [quinone] (231 aa).

The Flavodoxin-like domain occupies 8-178 (CLMLYSTTDG…AVRRFASDFA (171 aa)). FMN-binding positions include 14–18 (TTDGH) and 90–158 (FFSV…ETDS). The helical transmembrane segment at 208–228 (CLLAIVGMSAAVIVGIRIIAA) threads the bilayer.

This sequence belongs to the HemG family. The cofactor is FMN.

The protein resides in the membrane. It carries out the reaction protoporphyrinogen IX + 3 a menaquinone = protoporphyrin IX + 3 a menaquinol. It catalyses the reaction protoporphyrinogen IX + 3 a ubiquinone = protoporphyrin IX + 3 a ubiquinol. The catalysed reaction is protoporphyrinogen IX + 3 a quinone = protoporphyrin IX + 3 a quinol. The protein operates within porphyrin-containing compound metabolism; protoporphyrin-IX biosynthesis; protoporphyrin-IX from protoporphyrinogen-IX: step 1/1. Functionally, in E.coli extracts under anerobic conditions catalyzes the 6-electron oxidation of protoporphyrinogen IX to form protoporphyrin IX, transferring electrons to fumarate reductase, presumably via menaquinone. In vitro under aerobic conditions forms protoporphyrin IX using ubiquinone as an electron acceptor. Complements an E.coli hemG deletion, allowing normal growth in vivo. This is Protoporphyrinogen IX dehydrogenase [quinone] from Leishmania major.